A 292-amino-acid chain; its full sequence is Cyclic dipurine nucleotide synthase (292 aa).

Gln47 contributes to the ATP binding site. A GTP-binding site is contributed by 48–52 (GSYRN). Mg(2+)-binding residues include Asp61 and Asp63. ATP-binding positions include Asp63, 121–122 (NK), and Asp136. Asp136 is a binding site for Mg(2+). GTP contacts are provided by Lys197 and Ser216.

Belongs to the CD-NTase family. E01 subfamily. Requires Mg(2+) as cofactor.

The catalysed reaction is 2 ATP = 3',3'-c-di-AMP + 2 diphosphate. The enzyme catalyses 2 GTP = 3',3'-c-di-GMP + 2 diphosphate. It carries out the reaction GTP + ATP = 3',3'-cGAMP + 2 diphosphate. Its function is as follows. Cyclic nucleotide synthase (second messenger synthase) of a CBASS antivirus system. CBASS (cyclic oligonucleotide-based antiphage signaling system) provides immunity against bacteriophage. The CD-NTase protein synthesizes cyclic nucleotides in response to infection; these serve as specific second messenger signals. The signals activate a diverse range of effectors, leading to bacterial cell death and thus abortive phage infection. A type I-A(GA) CBASS system. Functionally, cyclic dinucleotide synthase that catalyzes the synthesis of 3'3'-cyclic GMP-AMP (cGAMP) from GTP and ATP, and of c-di-AMP and c-di-GMP, that are second messengers for cell signal transduction. The protein is Cyclic dipurine nucleotide synthase of Elizabethkingia meningoseptica (Chryseobacterium meningosepticum).